Here is a 258-residue protein sequence, read N- to C-terminus: Small ribosomal subunit protein uS2 (258 aa).

The tract at residues 226–258 (QGVSNEEVAAEQNIDLDEKEKSEETEATEATEE) is disordered.

It belongs to the universal ribosomal protein uS2 family.

The polypeptide is Small ribosomal subunit protein uS2 (Staphylococcus aureus (strain COL)).